The following is a 533-amino-acid chain: Peptidyl-prolyl cis-trans isomerase-like 2 (533 aa).

One can recognise a U-box domain in the interval 38–111 (KRLPFYCCSL…DEYFCPVTYK (74 aa)). Residues 284-438 (KKSYARIITN…REIKIKQIQM (155 aa)) enclose the PPIase cyclophilin-type domain. Positions 443-519 (FEEYQRRLKN…SNEGEELQKK (77 aa)) form a coiled coil. Residues 454–477 (LTHEANAERENEEMRKRREKEEKM) show a composition bias toward basic and acidic residues. The tract at residues 454-533 (LTHEANAERE…KTTFGNFDNF (80 aa)) is disordered. Polar residues predominate over residues 523-533 (TKTTFGNFDNF).

Belongs to the cyclophilin-type PPIase family. PPIL2 subfamily.

The protein localises to the nucleus. The enzyme catalyses [protein]-peptidylproline (omega=180) = [protein]-peptidylproline (omega=0). It catalyses the reaction S-ubiquitinyl-[E2 ubiquitin-conjugating enzyme]-L-cysteine + [acceptor protein]-L-lysine = [E2 ubiquitin-conjugating enzyme]-L-cysteine + N(6)-ubiquitinyl-[acceptor protein]-L-lysine.. The protein operates within protein modification; protein ubiquitination. Its function is as follows. May catalyze the cis-trans isomerization of proline imidic peptide bonds in oligopeptides thereby assisting the folding of proteins. May also function as a chaperone, playing a role in intracellular transport of proteins. May also have a protein ubiquitin ligase activity acting as an E3 ubiquitin protein ligase or as a ubiquitin-ubiquitin ligase promoting elongation of ubiquitin chains on proteins. The protein is Peptidyl-prolyl cis-trans isomerase-like 2 (cyp14) of Rhizopus delemar (strain RA 99-880 / ATCC MYA-4621 / FGSC 9543 / NRRL 43880) (Mucormycosis agent).